The primary structure comprises 471 residues: Methylenetetrahydrofolate--tRNA-(uracil-5-)-methyltransferase TrmFO (471 aa).

FAD is bound at residue 13–18 (GGGLAG).

Belongs to the MnmG family. TrmFO subfamily. Requires FAD as cofactor.

The protein localises to the cytoplasm. The catalysed reaction is uridine(54) in tRNA + (6R)-5,10-methylene-5,6,7,8-tetrahydrofolate + NADH + H(+) = 5-methyluridine(54) in tRNA + (6S)-5,6,7,8-tetrahydrofolate + NAD(+). It carries out the reaction uridine(54) in tRNA + (6R)-5,10-methylene-5,6,7,8-tetrahydrofolate + NADPH + H(+) = 5-methyluridine(54) in tRNA + (6S)-5,6,7,8-tetrahydrofolate + NADP(+). Its function is as follows. Catalyzes the folate-dependent formation of 5-methyl-uridine at position 54 (M-5-U54) in all tRNAs. The protein is Methylenetetrahydrofolate--tRNA-(uracil-5-)-methyltransferase TrmFO of Azorhizobium caulinodans (strain ATCC 43989 / DSM 5975 / JCM 20966 / LMG 6465 / NBRC 14845 / NCIMB 13405 / ORS 571).